Reading from the N-terminus, the 388-residue chain is Outer membrane protein assembly factor BamB (388 aa).

The signal sequence occupies residues 1 to 17 (MVLSLLSVMLLSGYKFL).

The protein belongs to the BamB family. In terms of assembly, part of the Bam complex, which is composed of the outer membrane protein BamA, and four lipoproteins BamB, BamC, BamD and BamE.

Its subcellular location is the cell outer membrane. Its function is as follows. Part of the outer membrane protein assembly complex, which is involved in assembly and insertion of beta-barrel proteins into the outer membrane. This Moranella endobia (strain PCIT) protein is Outer membrane protein assembly factor BamB.